The primary structure comprises 320 residues: Foldase protein PrsA (320 aa).

The signal sequence occupies residues 1–20; sequence MKMINKLIVPVTASALLLGA. Cys21 is lipidated: N-palmitoyl cysteine. The S-diacylglycerol cysteine moiety is linked to residue Cys21. One can recognise a PpiC domain in the interval 139-245; it reads EDSKKASHIL…FGYHIIKADK (107 aa). Residues 159–198 form a disordered region; sequence EGLDDKEAKQKAEEIQKEVSKDPSKFGEIAKKESMDTGSA.

The protein belongs to the PrsA family.

The protein resides in the cell membrane. The catalysed reaction is [protein]-peptidylproline (omega=180) = [protein]-peptidylproline (omega=0). Plays a major role in protein secretion by helping the post-translocational extracellular folding of several secreted proteins. The protein is Foldase protein PrsA of Staphylococcus aureus (strain MRSA252).